A 2611-amino-acid chain; its full sequence is Highly reducing polyketide synthase ATEG_07659 (2611 aa).

Residues 10–409 enclose the Ketosynthase family 3 (KS3) domain; the sequence is SEPIAIIGLS…GTNSHVIVEG (400 aa). Active-site for beta-ketoacyl synthase activity residues include Cys-157, His-292, and His-330. The tract at residues 537–844 is malonyl-CoA:ACP transacylase (MAT) domain; the sequence is MVFTGQGAQW…VRFVEAFTDM (308 aa). Residues 969–1109 are N-terminal hotdog fold; sequence HDLLGVLVPG…GLITVQMAAD (141 aa). The 324-residue stretch at 969-1292 folds into the PKS/mFAS DH domain; it reads HDLLGVLVPG…CQSLGRSAPG (324 aa). Residues 970-1289 form a dehydratase (DH) domain region; that stretch reads DLLGVLVPGT…GLVCQSLGRS (320 aa). His-1001 (proton acceptor; for dehydratase activity) is an active-site residue. A C-terminal hotdog fold region spans residues 1128-1292; that stretch reads GYTRRIDPQD…CQSLGRSAPG (165 aa). Asp-1199 acts as the Proton donor; for dehydratase activity in catalysis. The methyltransferase (CMet) domain stretch occupies residues 1469–1602; the sequence is FGQLKSLLAA…GATLLLMETT (134 aa). An enoyl reductase (ER) domain region spans residues 1898-2213; sequence GLLDTLAFGD…TGKHLGKLVL (316 aa). Residues 2236–2416 are ketoreductase (KR) domain; it reads ASYLLVGGVG…AVSLDMGVIK (181 aa). A compositionally biased stretch (low complexity) spans 2499 to 2509; that stretch reads SRAQAQQAGGD. The tract at residues 2499-2520 is disordered; it reads SRAQAQQAGGDSDSEPLSAKLR. Residues 2527–2604 form the Carrier domain; the sequence is AAARCVGDAI…ALALDVVAKS (78 aa). Ser-2564 is subject to O-(pantetheine 4'-phosphoryl)serine.

Its pathway is secondary metabolite biosynthesis. Highly reducing polyketide synthase; part of the cluster B that mediates the biosynthesis of azasperpyranones, members of the azaphilone family that exhibit anti-cancer activities. Azasperpyranones are synthesized by 2 clusters, A and B. Cluster A is responsible for the production of the polyhydric phenol moiety while the azaphilonoid scaffold is produced by the cluster B. The non-reducing polyketide synthase ATEG_03629 produces 5-methyl orsellinic acid, which is then reduced to 5-methyl orsellinic aldehyde by the NRPS-like protein ATEG_03630. 5-methyl orsellinic aldehyde is then first hydroxylated by the FAD-dependent monooxygenase ATEG_03635 and subsequently hydroxylated by the cytochrome P450 monooxygenase ATEG_03631 to produce the unstable polyhydric phenol precursor of azasperpyranones. On the other hand, the polyketide synthase ATEG_07659 is responsible for producing the 3,5-dimethyloctadienone moiety from acetyl-CoA, three malonyl-CoA, and two S-adenosyl methionines (SAM). The 3,5-dimethyloctadienone moiety is then loaded onto the SAT domain of ATEG_07661 and extended with four malonyl-CoA and one SAM, which leads to the formation of 2,4-dihydroxy-6-(5,7-dimethyl-2-oxo-trans-3-trans-5-nonadienyl)-3-methylbenzaldehyde (compound 8) after reductive release and aldol condensation. The FAD-dependent monooxygenase ATEG_07662 is the next enzyme in the biosynthesis sequence and hydroxylates the side chain at the benzylic position of compound 8. In Aspergillus nidulans, afoF, the ortholog of the FAD-dependent oxygenase ATEG_07660, is the key enzyme for the biosynthesis of asperfuranone by catalyzing the hydroxylation at C-8 of to prevent the formation of a six-membered ring hemiacetal intermediate and thus facilitating the formation of a five-membered ring to produce asperfuranone. In Aspergillus terreus, ATEG_07660 is probably not functional, which leads to the formation of the six-membered ring hemiacetal intermediate presperpyranone instead of asperfuranone. Finally, ATEG_03636 is involved in the condensation of the polyhydric phenol moiety produced by cluster A and the perasperpyranone precursor produced by cluster B, to yield azasperpyranone A. Further modifications of azasperpyranone A result in the production of derivatives, including azasperpyranone B to F. The sequence is that of Highly reducing polyketide synthase ATEG_07659 from Aspergillus terreus (strain NIH 2624 / FGSC A1156).